A 1360-amino-acid polypeptide reads, in one-letter code: S-layer protein A (1360 aa).

Positions 1 to 24 (MNKSAIRYLSLLLVFLMGGSFLAG) are cleaved as a signal peptide.

This sequence belongs to the Sulfolobales SlaA family. As to quaternary structure, the mushroom-shaped unit cells of the Sulfolobales' S-layers may consist of three SlaB subunits and six SlaA subunits.

Its subcellular location is the secreted. The protein localises to the cell wall. It localises to the S-layer. Functionally, S-layer large protein. May form the highly ordered outer sheath. The protein is S-layer protein A of Metallosphaera sedula (strain ATCC 51363 / DSM 5348 / JCM 9185 / NBRC 15509 / TH2).